Consider the following 82-residue polypeptide: Sec-independent protein translocase protein TatA (82 aa).

The helical transmembrane segment at 1-21 (MGSFSIWHWLIVLLVVVMIFG) threads the bilayer. The disordered stretch occupies residues 39–82 (FKDGMKDGSTTDAPAASSAPAAQVTGQPANSDKSTIDVEARQKS). Positions 51–60 (APAASSAPAA) are enriched in low complexity. The span at 62-71 (VTGQPANSDK) shows a compositional bias: polar residues. The span at 72–82 (STIDVEARQKS) shows a compositional bias: basic and acidic residues.

It belongs to the TatA/E family. The Tat system comprises two distinct complexes: a TatABC complex, containing multiple copies of TatA, TatB and TatC subunits, and a separate TatA complex, containing only TatA subunits. Substrates initially bind to the TatABC complex, which probably triggers association of the separate TatA complex to form the active translocon.

The protein localises to the cell inner membrane. Part of the twin-arginine translocation (Tat) system that transports large folded proteins containing a characteristic twin-arginine motif in their signal peptide across membranes. TatA could form the protein-conducting channel of the Tat system. This is Sec-independent protein translocase protein TatA from Variovorax paradoxus (strain S110).